The sequence spans 105 residues: Cell division protein FtsL (105 aa).

The Cytoplasmic portion of the chain corresponds to 1–22; that stretch reads MIGNERHGLVGVIGADLIRNAK. Residues 23–43 form a helical membrane-spanning segment; sequence IPLILLVAVLISAVLVVTTAH. Residues 44–105 are Periplasmic-facing; that stretch reads RTRLLTAERE…DPSQENIVIK (62 aa).

The protein belongs to the FtsL family. In terms of assembly, part of a complex composed of FtsB, FtsL and FtsQ.

It localises to the cell inner membrane. Essential cell division protein. May link together the upstream cell division proteins, which are predominantly cytoplasmic, with the downstream cell division proteins, which are predominantly periplasmic. In Yersinia pestis, this protein is Cell division protein FtsL.